Here is a 154-residue protein sequence, read N- to C-terminus: 17 kDa surface antigen (154 aa).

An N-terminal signal peptide occupies residues 1–19; that stretch reads MKLLSKIMIIALAASTLQA. C20 carries the N-palmitoyl cysteine lipid modification. C20 carries S-diacylglycerol cysteine lipidation.

Belongs to the rickettsiale 17 kDa surface antigen family.

The protein localises to the cell outer membrane. The polypeptide is 17 kDa surface antigen (omp) (Rickettsia amblyommatis (Rickettsia amblyommii)).